The following is a 404-amino-acid chain: MNNNAQNKRSLDDSNGNDTKRPKQEDPKYILPKQVNTYPATLPERKKNIEYILNILTKKQPNITNPKLKAIDIEYEIAKKSTNATYKTVFRQEVFKLTKPTKSPSQLSPQQEHLKKLDQEAKELKILKEMVVSRKTLIAFGYIMEPPESIPNEKITRICNRCGTEFRLDQQLQPIVCEFHHGKKQRGKYICCMSNVDGQPCSKAKNHVYLLNTPEEKQALLPYQFTKELFTTTSTKSKSRVLGIDCEMGFTTKGFELMRITAIDYFTSKTVLDIFIKPIGEIVDFNTRYSGIHELTDDFLSWEQSMEKLGEIMDSETILIGHGLENDMNAMRLIHENIIDTSILFPNKWKTGPTRRWSLKDLAFEFLSRRIQTGEHDSCEDSIAAIDIVKYFVKKRLQSIGSSS.

The span at 1-17 shows a compositional bias: polar residues; the sequence is MNNNAQNKRSLDDSNGN. A disordered region spans residues 1–29; sequence MNNNAQNKRSLDDSNGNDTKRPKQEDPKY. A compositionally biased stretch (basic and acidic residues) spans 18-28; sequence DTKRPKQEDPK. The region spanning 241–389 is the Exonuclease domain; that stretch reads VLGIDCEMGF…EDSIAAIDIV (149 aa).

It belongs to the REXO1/REXO3 family.

It is found in the cytoplasm. The protein resides in the nucleus. Its function is as follows. 3' to 5' exoribonuclease required for proper 3' end maturation of MRP RNA and of the U5L snRNA. The chain is RNA exonuclease 3 (REX3) from Candida albicans (strain SC5314 / ATCC MYA-2876) (Yeast).